The chain runs to 2542 residues: Talin-2 (2542 aa).

One can recognise an FERM domain in the interval 88–406 (RPQKIRMLDG…GYIDIILKKK (319 aa)). Residues 312 to 406 (GVSFFLVKEK…GYIDIILKKK (95 aa)) are interaction with PIP5K1C. A phosphoserine mark is found at serine 428, serine 449, serine 623, and serine 1023. Residue tyrosine 1665 is modified to Phosphotyrosine. A Phosphothreonine modification is found at threonine 1843. The region spanning 2294 to 2533 (TEWVDPEDPT…QIRQQQYKFL (240 aa)) is the I/LWEQ domain.

In terms of assembly, interacts directly with PIP5K1C.

Its subcellular location is the cytoplasm. The protein localises to the cell junction. The protein resides in the focal adhesion. It localises to the synapse. It is found in the cell membrane. Its subcellular location is the cytoskeleton. Functionally, as a major component of focal adhesion plaques that links integrin to the actin cytoskeleton, may play an important role in cell adhesion. Recruits PIP5K1C to focal adhesion plaques and strongly activates its kinase activity. The chain is Talin-2 (TLN2) from Homo sapiens (Human).